A 566-amino-acid polypeptide reads, in one-letter code: Myo-inositol transporter 1A (566 aa).

At 1–64 (MSDEKNYGIS…ERTEKLTKFV (64 aa)) the chain is on the cytoplasmic side. A helical transmembrane segment spans residues 65-85 (VGLALFASVSGFCFGFDTGVI). Residues 86–106 (SAALVSIKDDFGHILDDTEKE) lie on the Extracellular side of the membrane. A helical membrane pass occupies residues 107–127 (WISAATSCGALVGALSSGALA). Residues 128–140 (DRVGRKWTLAVGD) lie on the Cytoplasmic side of the membrane. A helical transmembrane segment spans residues 141 to 161 (VWFTLGAIIICSSFSVVQMIV). Residues 162–163 (GR) lie on the Extracellular side of the membrane. A helical transmembrane segment spans residues 164–184 (AVLGLGVGTAAAIAPLYIAEV). The Cytoplasmic segment spans residues 185 to 192 (APTRFRGA). The chain crosses the membrane as a helical span at residues 193–213 (LVTVQSIAITGGQFFSYCIGI). Residues 214–222 (PLTGHNGWR) lie on the Extracellular side of the membrane. The chain crosses the membrane as a helical span at residues 223-243 (IQFAIGIVPAVVQAAVVHFLP). Residues 244 to 313 (ESPRYDLLRG…VLTEGKYRKP (70 aa)) lie on the Cytoplasmic side of the membrane. Residues 314-334 (AITALGIGIFQQLCGFNSLMY) form a helical membrane-spanning segment. Residues 335–349 (YAATIFSYAGFDNPT) lie on the Extracellular side of the membrane. Residues 350–370 (SVGLIVSGTNWFFTFVAMMIL) traverse the membrane as a helical segment. At 371–377 (DRVGKRR) the chain is on the cytoplasmic side. The helical transmembrane segment at 378–398 (ILLSTYPGMIAGLALASVAFW) threads the bilayer. At 399-421 (KMTGSTGHRLVEGTEYPQQWSNM) the chain is on the extracellular side. Residues 422 to 442 (MLGMMVVFIAFYATGSGNITW) form a helical membrane-spanning segment. The Cytoplasmic segment spans residues 443–458 (TVGEMFPLEMRGIGAS). The helical transmembrane segment at 459 to 479 (ILAGGVWAANIVISATFLTLM) threads the bilayer. Topologically, residues 480–485 (NAIGPT) are extracellular. The chain crosses the membrane as a helical span at residues 486–506 (PTFALYAGICLAGLIFIYFCY). Residues 507-566 (PEPSGLSLEEIQIIYNYGFGVQKSREIRAEHKLKAQEMRDRANSHIGGSATASDDQLNKV) lie on the Cytoplasmic side of the membrane. The tract at residues 546 to 566 (DRANSHIGGSATASDDQLNKV) is disordered. Residues 556–566 (ATASDDQLNKV) are compositionally biased toward polar residues.

The protein belongs to the major facilitator superfamily. Sugar transporter (TC 2.A.1.1) family.

Its subcellular location is the cell membrane. The enzyme catalyses myo-inositol(out) + H(+)(out) = myo-inositol(in) + H(+)(in). Functionally, major transporter for myo-inositol. Plays a role in the traversal of the host blood-brain barrier. The protein is Myo-inositol transporter 1A of Cryptococcus neoformans var. grubii serotype A (strain H99 / ATCC 208821 / CBS 10515 / FGSC 9487) (Filobasidiella neoformans var. grubii).